The sequence spans 317 residues: Cytochrome f (317 aa).

Residues 1–34 form the signal peptide; sequence MINFKKQIMKKTTFFLCAMLLVSSILIAPRSSLA. Residues Y35, C55, C58, and H59 each contribute to the heme site. The helical transmembrane segment at 284-304 threads the bilayer; the sequence is IIGLIAFFIGVGLTQILLVLK.

The protein belongs to the cytochrome f family. In terms of assembly, the 4 large subunits of the cytochrome b6-f complex are cytochrome b6, subunit IV (17 kDa polypeptide, PetD), cytochrome f and the Rieske protein, while the 4 small subunits are PetG, PetL, PetM and PetN. The complex functions as a dimer. Requires heme as cofactor.

It is found in the cellular thylakoid membrane. Its function is as follows. Component of the cytochrome b6-f complex, which mediates electron transfer between photosystem II (PSII) and photosystem I (PSI), cyclic electron flow around PSI, and state transitions. In Prochlorococcus marinus (strain MIT 9515), this protein is Cytochrome f.